Here is a 123-residue protein sequence, read N- to C-terminus: Alpha-lactalbumin B/C (123 aa).

A C-type lysozyme domain is found at 1-123 (KQFTKCQLSQ…KLEQWLCEEL (123 aa)). 4 cysteine pairs are disulfide-bonded: cysteine 6/cysteine 120, cysteine 28/cysteine 111, cysteine 61/cysteine 77, and cysteine 73/cysteine 91. Residues lysine 79, aspartate 82, aspartate 84, aspartate 87, and aspartate 88 each coordinate Ca(2+).

The protein belongs to the glycosyl hydrolase 22 family. As to quaternary structure, lactose synthase (LS) is a heterodimer of a catalytic component, beta1,4-galactosyltransferase (beta4Gal-T1) and a regulatory component, alpha-lactalbumin (LA). Mammary gland specific. Secreted in milk.

It is found in the secreted. Regulatory subunit of lactose synthase, changes the substrate specificity of galactosyltransferase in the mammary gland making glucose a good acceptor substrate for this enzyme. This enables LS to synthesize lactose, the major carbohydrate component of milk. In other tissues, galactosyltransferase transfers galactose onto the N-acetylglucosamine of the oligosaccharide chains in glycoproteins. The protein is Alpha-lactalbumin B/C of Equus caballus (Horse).